Reading from the N-terminus, the 364-residue chain is Phosphoserine aminotransferase (364 aa).

R42 is an L-glutamate binding site. Pyridoxal 5'-phosphate contacts are provided by residues G76–R77, W102, T156, D175, and Q198. An N6-(pyridoxal phosphate)lysine modification is found at K199. N240–T241 contacts pyridoxal 5'-phosphate.

This sequence belongs to the class-V pyridoxal-phosphate-dependent aminotransferase family. SerC subfamily. In terms of assembly, homodimer. Requires pyridoxal 5'-phosphate as cofactor.

It is found in the cytoplasm. It carries out the reaction O-phospho-L-serine + 2-oxoglutarate = 3-phosphooxypyruvate + L-glutamate. It catalyses the reaction 4-(phosphooxy)-L-threonine + 2-oxoglutarate = (R)-3-hydroxy-2-oxo-4-phosphooxybutanoate + L-glutamate. It functions in the pathway amino-acid biosynthesis; L-serine biosynthesis; L-serine from 3-phospho-D-glycerate: step 2/3. Its pathway is cofactor biosynthesis; pyridoxine 5'-phosphate biosynthesis; pyridoxine 5'-phosphate from D-erythrose 4-phosphate: step 3/5. Its function is as follows. Catalyzes the reversible conversion of 3-phosphohydroxypyruvate to phosphoserine and of 3-hydroxy-2-oxo-4-phosphonooxybutanoate to phosphohydroxythreonine. The polypeptide is Phosphoserine aminotransferase (Shewanella sediminis (strain HAW-EB3)).